Here is a 273-residue protein sequence, read N- to C-terminus: ABC transporter glutamine-binding protein GlnH (273 aa).

Positions 1-20 are cleaved as a signal peptide; the sequence is MKKIFSLALISLFAVILLAA. Residue Cys21 is the site of N-palmitoyl cysteine attachment. Residue Cys21 is the site of S-diacylglycerol cysteine attachment.

The protein belongs to the bacterial solute-binding protein 3 family. The complex is composed of two ATP-binding proteins (GlnQ), two transmembrane proteins (GlnM and GlnP) and a solute-binding protein (GlnH).

It localises to the cell membrane. Its function is as follows. Part of the ABC transporter complex GlnHMPQ involved in glutamine transport. This Bacillus subtilis (strain 168) protein is ABC transporter glutamine-binding protein GlnH (glnH).